Here is a 245-residue protein sequence, read N- to C-terminus: 1-(5-phosphoribosyl)-5-[(5-phosphoribosylamino)methylideneamino] imidazole-4-carboxamide isomerase (245 aa).

Aspartate 7 (proton acceptor) is an active-site residue. The active-site Proton donor is aspartate 129.

Belongs to the HisA/HisF family.

It is found in the cytoplasm. It carries out the reaction 1-(5-phospho-beta-D-ribosyl)-5-[(5-phospho-beta-D-ribosylamino)methylideneamino]imidazole-4-carboxamide = 5-[(5-phospho-1-deoxy-D-ribulos-1-ylimino)methylamino]-1-(5-phospho-beta-D-ribosyl)imidazole-4-carboxamide. It functions in the pathway amino-acid biosynthesis; L-histidine biosynthesis; L-histidine from 5-phospho-alpha-D-ribose 1-diphosphate: step 4/9. In Citrobacter koseri (strain ATCC BAA-895 / CDC 4225-83 / SGSC4696), this protein is 1-(5-phosphoribosyl)-5-[(5-phosphoribosylamino)methylideneamino] imidazole-4-carboxamide isomerase.